We begin with the raw amino-acid sequence, 688 residues long: Coiled-coil domain-containing protein 157 (688 aa).

The segment covering 143-153 (ANQGETLTSKP) has biased composition (polar residues). 5 disordered regions span residues 143 to 162 (ANQG…PAGS), 168 to 189 (AQLV…ERDS), 322 to 341 (QAAR…QWER), 366 to 385 (QQRE…QAEA), and 592 to 688 (QGAE…ERPT). A coiled-coil region spans residues 288–572 (KLVGLLRAQL…LSKIREVAQQ (285 aa)). The segment covering 369 to 382 (ESTQAVESKAQQLQ) has biased composition (polar residues). Residues 671-680 (SPSSGRASPA) are compositionally biased toward low complexity.

The sequence is that of Coiled-coil domain-containing protein 157 (CCDC157) from Bos taurus (Bovine).